An 802-amino-acid chain; its full sequence is Post-transcriptional regulator mkt1 (802 aa).

A phosphoserine mark is found at S227, S228, and S230.

Belongs to the XPG/RAD2 endonuclease family. Interacts with pab1 binding protein ath1.

Functionally, involved in post-transcriptional regulation of gene expression by 3'-UTR-mediated RNA regulation. Promotes interactions between mRNA and poly(A)-binding protein. Binds the 3' UTR of mRNAs, centromeric transcripts and antisense-rDNA. Required for the establishment but not the maintenance of heterochromatin at pericentromeres, and for the maintenance of small domains of facultative heterochromatin known as HOODs. This is Post-transcriptional regulator mkt1 from Schizosaccharomyces pombe (strain 972 / ATCC 24843) (Fission yeast).